The sequence spans 88 residues: MSSIHVASMILLLFLFLHHSDSRHLDNVHITASRFSLVKDQNVVSSSTSKEPVKVSRFVPGPLKHHHRRPPLLFADYPKPSTRPPRHN.

Residues 1-22 (MSSIHVASMILLLFLFLHHSDS) form the signal peptide. The propeptide occupies 23-75 (RHLDNVHITASRFSLVKDQNVVSSSTSKEPVKVSRFVPGPLKHHHRRPPLLFA). Positions 44 to 88 (VSSSTSKEPVKVSRFVPGPLKHHHRRPPLLFADYPKPSTRPPRHN) are disordered. Sulfotyrosine is present on Y77. Residue P85 is modified to Hydroxyproline.

This sequence belongs to the RGF family. In terms of assembly, binds to LRR receptor-like serine/threonine-protein kinases RGI1, RGI2 and RGI3 to trigger their dimerization with SERK proteins and subsequent signaling. In terms of tissue distribution, expressed in roots, shoots, leaves and flowers.

The protein localises to the secreted. It is found in the endoplasmic reticulum. In terms of biological role, signaling peptide (root growth factor) that maintains the postembryonic root stem cell niche. Regulates the pattern of root growth and lateral root development by modulating the length and the number of cortical cells in the root apical meristem (RAM), and the anticlinal asymmetric cell divisions in lateral root initiation cells. The chain is Protein GOLVEN 10 from Arabidopsis thaliana (Mouse-ear cress).